Consider the following 391-residue polypeptide: Elongation factor Tu (391 aa).

Positions 10-201 (KPHVNIGTIG…QVDAYIPTPV (192 aa)) constitute a tr-type G domain. The interval 19–26 (GHVDHGKT) is G1. A GTP-binding site is contributed by 19–26 (GHVDHGKT). Thr-26 serves as a coordination point for Mg(2+). The tract at residues 55 to 59 (GITIS) is G2. A G3 region spans residues 76-79 (DCPG). Residues 76-80 (DCPGH) and 131-134 (NKVD) each bind GTP. The tract at residues 131–134 (NKVD) is G4. Residues 169–171 (SAL) form a G5 region.

Belongs to the TRAFAC class translation factor GTPase superfamily. Classic translation factor GTPase family. EF-Tu/EF-1A subfamily. In terms of assembly, monomer.

It localises to the cytoplasm. The enzyme catalyses GTP + H2O = GDP + phosphate + H(+). GTP hydrolase that promotes the GTP-dependent binding of aminoacyl-tRNA to the A-site of ribosomes during protein biosynthesis. This Mesorhizobium japonicum (strain LMG 29417 / CECT 9101 / MAFF 303099) (Mesorhizobium loti (strain MAFF 303099)) protein is Elongation factor Tu.